We begin with the raw amino-acid sequence, 417 residues long: Phosphoglycerate kinase (417 aa).

The (2R)-3-phosphoglycerate site is built by V23, D24, F25, N26, Q38, R39, S62, H63, G65, R66, L121, R122, H169, and R170. Residue G213 participates in ADP binding. G213 is a binding site for CDP. 2 residues coordinate AMP: A214 and K215. ATP is bound at residue A214. A214 serves as a coordination point for Mg(2+). D218 is a binding site for CDP. D218 serves as a coordination point for Mg(2+). Residue K219 coordinates AMP. K219 provides a ligand contact to ATP. Residue G237 coordinates ADP. Position 237 (G237) interacts with CDP. G238 and G312 together coordinate AMP. Positions 238 and 312 each coordinate ATP. The CDP site is built by G337 and F342. Position 342 (F342) interacts with ADP. E343 lines the AMP pocket. 3 residues coordinate ATP: E343, D374, and T375. D374 is a binding site for Mg(2+).

It belongs to the phosphoglycerate kinase family. Monomer. It depends on Mg(2+) as a cofactor.

The protein resides in the cytoplasm. The protein localises to the mitochondrion. It catalyses the reaction (2R)-3-phosphoglycerate + ATP = (2R)-3-phospho-glyceroyl phosphate + ADP. It participates in carbohydrate degradation; glycolysis; pyruvate from D-glyceraldehyde 3-phosphate: step 2/5. Functionally, catalyzes one of the two ATP producing reactions in the glycolytic pathway via the reversible conversion of 1,3-diphosphoglycerate to 3-phosphoglycerate. Both L- and D- forms of purine and pyrimidine nucleotides can be used as substrates, but the activity is much lower on pyrimidines. Negatively regulates the biosynthesis of acetyl-CoA from pyruvate in the mitochondrion. In Yarrowia lipolytica (strain CLIB 122 / E 150) (Yeast), this protein is Phosphoglycerate kinase (PGK1).